The following is a 92-amino-acid chain: Small ribosomal subunit protein uS19c (92 aa).

This sequence belongs to the universal ribosomal protein uS19 family.

It is found in the plastid. The protein localises to the chloroplast. Protein S19 forms a complex with S13 that binds strongly to the 16S ribosomal RNA. The polypeptide is Small ribosomal subunit protein uS19c (rps19) (Picea abies (Norway spruce)).